The following is a 144-amino-acid chain: Kunitz-type elastase inhibitor BrEI (144 aa).

Asparagine 38 carries N-linked (GlcNAc...) asparagine glycosylation. Cysteine 41 and cysteine 88 form a disulfide bridge.

This sequence belongs to the leguminous Kunitz-type inhibitor family.

In terms of biological role, inhibitor of porcine pancreatic elastase with a Ki of 27 nM. Does not inhibit human neutrophil elastase, bovine trypsin, human plasma kallikrein or porcine pancreatic kallikrein. The polypeptide is Kunitz-type elastase inhibitor BrEI (Bauhinia rufa (Orchid tree)).